We begin with the raw amino-acid sequence, 102 residues long: Small ribosomal subunit protein uS10 (102 aa).

It belongs to the universal ribosomal protein uS10 family. Part of the 30S ribosomal subunit.

Functionally, involved in the binding of tRNA to the ribosomes. The chain is Small ribosomal subunit protein uS10 from Methanothermobacter thermautotrophicus (strain ATCC 29096 / DSM 1053 / JCM 10044 / NBRC 100330 / Delta H) (Methanobacterium thermoautotrophicum).